Here is a 454-residue protein sequence, read N- to C-terminus: DNA repair protein RadA (454 aa).

The segment at 11–28 (CTECGTHSPKWLGQCSGC) adopts a C4-type zinc-finger fold. Position 94–101 (94–101 (GEPGIGKS)) interacts with ATP. The RadA KNRFG motif signature appears at 251–255 (KNRFG). Residues 350–454 (DVFLSIAGGL…TIKDAVRLLQ (105 aa)) form a lon-protease-like region.

It belongs to the RecA family. RadA subfamily.

Its function is as follows. DNA-dependent ATPase involved in processing of recombination intermediates, plays a role in repairing DNA breaks. Stimulates the branch migration of RecA-mediated strand transfer reactions, allowing the 3' invading strand to extend heteroduplex DNA faster. Binds ssDNA in the presence of ADP but not other nucleotides, has ATPase activity that is stimulated by ssDNA and various branched DNA structures, but inhibited by SSB. Does not have RecA's homology-searching function. In Chlamydia trachomatis serovar D (strain ATCC VR-885 / DSM 19411 / UW-3/Cx), this protein is DNA repair protein RadA.